The chain runs to 122 residues: Large ribosomal subunit protein bL12 (122 aa).

Belongs to the bacterial ribosomal protein bL12 family. Homodimer. Part of the ribosomal stalk of the 50S ribosomal subunit. Forms a multimeric L10(L12)X complex, where L10 forms an elongated spine to which 2 to 4 L12 dimers bind in a sequential fashion. Binds GTP-bound translation factors.

In terms of biological role, forms part of the ribosomal stalk which helps the ribosome interact with GTP-bound translation factors. Is thus essential for accurate translation. The protein is Large ribosomal subunit protein bL12 of Staphylococcus saprophyticus subsp. saprophyticus (strain ATCC 15305 / DSM 20229 / NCIMB 8711 / NCTC 7292 / S-41).